The sequence spans 708 residues: Polyribonucleotide nucleotidyltransferase (708 aa).

Positions 486 and 492 each coordinate Mg(2+). The KH domain maps to 553–612 (PRITTIKVPPQKVREVIGSGGKVIREITEVTGTKIDIEDDGTIKIASADAEATQRAVDWI). Residues 622-690 (GVVYTGKVVK…DRGKIKLSMK (69 aa)) enclose the S1 motif domain.

It belongs to the polyribonucleotide nucleotidyltransferase family. Requires Mg(2+) as cofactor.

It is found in the cytoplasm. It catalyses the reaction RNA(n+1) + phosphate = RNA(n) + a ribonucleoside 5'-diphosphate. Its function is as follows. Involved in mRNA degradation. Catalyzes the phosphorolysis of single-stranded polyribonucleotides processively in the 3'- to 5'-direction. This Rhodospirillum rubrum (strain ATCC 11170 / ATH 1.1.1 / DSM 467 / LMG 4362 / NCIMB 8255 / S1) protein is Polyribonucleotide nucleotidyltransferase.